A 177-amino-acid polypeptide reads, in one-letter code: uncharacterized protein (177 aa).

This is an uncharacterized protein from Schizosaccharomyces pombe (strain 972 / ATCC 24843) (Fission yeast).